A 578-amino-acid chain; its full sequence is NADH-quinone oxidoreductase subunit C/D (578 aa).

The NADH dehydrogenase I subunit C stretch occupies residues 1–167; it reads MILSLFKLFG…DEFYFTKQKE (167 aa). The interval 192-578 is NADH dehydrogenase I subunit D; it reads EYMFLNFGPN…IDFVMSDVDR (387 aa).

In the N-terminal section; belongs to the complex I 30 kDa subunit family. This sequence in the C-terminal section; belongs to the complex I 49 kDa subunit family. In terms of assembly, NDH-1 is composed of 13 different subunits. Subunits NuoB, CD, E, F, and G constitute the peripheral sector of the complex.

It localises to the cell inner membrane. The enzyme catalyses a quinone + NADH + 5 H(+)(in) = a quinol + NAD(+) + 4 H(+)(out). Functionally, NDH-1 shuttles electrons from NADH, via FMN and iron-sulfur (Fe-S) centers, to quinones in the respiratory chain. The immediate electron acceptor for the enzyme in this species is believed to be ubiquinone. Couples the redox reaction to proton translocation (for every two electrons transferred, four hydrogen ions are translocated across the cytoplasmic membrane), and thus conserves the redox energy in a proton gradient. The chain is NADH-quinone oxidoreductase subunit C/D from Buchnera aphidicola subsp. Cinara cedri (strain Cc).